A 601-amino-acid chain; its full sequence is Deuterosome assembly protein 1 (601 aa).

Coiled-coil stretches lie at residues 14–59 (CEAE…NAQT), 86–197 (TQNY…KQQR), and 226–278 (IEKL…LQSR). 2 disordered regions span residues 115 to 135 (MKQN…PFEL) and 188 to 213 (QTQL…CESS). Basic and acidic residues predominate over residues 121–131 (HRKEASNKDET). The interval 307-326 (DNRKRVESSYSPSTKEPERK) is disordered. Residues 340–397 (HEKELNKMRSQLYQEEDLCSEQERMRNEISELTQELHQKEVTIATIMKKAALLERQLK) are a coiled coil. Phosphoserine is present on serine 544. A coiled-coil region spans residues 555–586 (AAQHFLMEEEKRAKELEKLLNTHIDELQRHTE).

Belongs to the CEP63 family. Interacts with CEP152; the interaction is mutually exclusive with CEP63.

The protein localises to the cytoplasm. Functionally, key structural component of the deuterosome, a structure that promotes de novo centriole amplification in multiciliated cells. Deuterosome-mediated centriole amplification occurs in terminally differentiated multiciliated cells and can generate more than 100 centrioles. Probably sufficient for the specification and formation of the deuterosome inner core. Interacts with CEP152 and recruits PLK4 to activate centriole biogenesis. The sequence is that of Deuterosome assembly protein 1 from Rattus norvegicus (Rat).